Here is a 476-residue protein sequence, read N- to C-terminus: Vitamin D-binding protein (476 aa).

The first 16 residues, Met1–Ala16, serve as a signal peptide directing secretion. Albumin domains are found at residues Leu17 to His208, Leu209 to Lys394, and Glu395 to Pro476. 2 disulfides stabilise this stretch: Cys29-Cys75 and Cys74-Cys83. N-linked (GlcNAc...) asparagine glycosylation occurs at Asn86. 12 disulfide bridges follow: Cys96-Cys112, Cys111-Cys122, Cys145-Cys190, Cys189-Cys198, Cys220-Cys266, Cys265-Cys273, Cys286-Cys300, Cys299-Cys311, Cys335-Cys376, Cys375-Cys384, Cys407-Cys453, and Cys452-Cys462.

Belongs to the ALB/AFP/VDB family. As to quaternary structure, associates with membrane-bound immunoglobulin on the surface of B-lymphocytes and with IgG Fc receptor on the membranes of T-lymphocytes. Interacts with LRP2; the interaction is required for renal uptake of GC in complex with 25-hydroxyvitamin D3.

The protein resides in the secreted. In terms of biological role, involved in vitamin D transport and storage, scavenging of extracellular G-actin, enhancement of the chemotactic activity of C5 alpha for neutrophils in inflammation and macrophage activation. This chain is Vitamin D-binding protein (GC), found in Oryctolagus cuniculus (Rabbit).